The chain runs to 152 residues: Snaclec coagulation factor IX/factor X-binding protein subunit A (152 aa).

A signal peptide spans 1 to 23 (MGRFIFVSFGLLVVAASLSGTGA). Cystine bridges form between Cys-25/Cys-36, Cys-53/Cys-150, and Cys-125/Cys-142. The C-type lectin domain maps to 32-151 (YEGHCYKAFE…CGQRIPFVCE (120 aa)). Ser-64, Glu-66, and Glu-70 together coordinate Ca(2+). Glu-151 contacts Ca(2+).

Belongs to the snaclec family. Heterodimer of subunits A and B; disulfide-linked. In terms of tissue distribution, expressed by the venom gland.

It is found in the secreted. Its function is as follows. Anticoagulant protein which binds to the gamma-carboxyglutamic acid-domain regions of factors IX (F9) and factor X (F10) in the presence of calcium with a 1 to 1 stoichiometry. The protein is Snaclec coagulation factor IX/factor X-binding protein subunit A of Trimeresurus stejnegeri (Chinese green tree viper).